We begin with the raw amino-acid sequence, 400 residues long: Putative C-type lectin domain family 20 member A (400 aa).

The N-terminal stretch at 1-20 (MLPRALLLSFCAAALQLVSS) is a signal peptide. 2 C-type lectin domains span residues 26 to 131 (LVKE…FLCY) and 159 to 275 (ISGQ…FFCF). Cystine bridges form between cysteine 40/cysteine 130, cysteine 105/cysteine 122, cysteine 180/cysteine 274, and cysteine 248/cysteine 266. The tract at residues 287-346 (ELPPLFHTSPTEMTEETTPRPGRAVASVGSGTDRRDTAAATEAQHLSSESKEKTSAQKSG) is disordered.

The polypeptide is Putative C-type lectin domain family 20 member A (Homo sapiens (Human)).